A 418-amino-acid chain; its full sequence is Serine--tRNA ligase (418 aa).

Residue 231–233 participates in L-serine binding; it reads TAE. Position 262–264 (262–264) interacts with ATP; it reads RRE. Glu-285 serves as a coordination point for L-serine. Position 349-352 (349-352) interacts with ATP; sequence EISS. Ser-384 is a binding site for L-serine.

It belongs to the class-II aminoacyl-tRNA synthetase family. Type-1 seryl-tRNA synthetase subfamily. Homodimer. The tRNA molecule binds across the dimer.

The protein localises to the cytoplasm. It carries out the reaction tRNA(Ser) + L-serine + ATP = L-seryl-tRNA(Ser) + AMP + diphosphate + H(+). It catalyses the reaction tRNA(Sec) + L-serine + ATP = L-seryl-tRNA(Sec) + AMP + diphosphate + H(+). The protein operates within aminoacyl-tRNA biosynthesis; selenocysteinyl-tRNA(Sec) biosynthesis; L-seryl-tRNA(Sec) from L-serine and tRNA(Sec): step 1/1. Catalyzes the attachment of serine to tRNA(Ser). Is also able to aminoacylate tRNA(Sec) with serine, to form the misacylated tRNA L-seryl-tRNA(Sec), which will be further converted into selenocysteinyl-tRNA(Sec). The protein is Serine--tRNA ligase of Coprothermobacter proteolyticus (strain ATCC 35245 / DSM 5265 / OCM 4 / BT).